The primary structure comprises 132 residues: Small ribosomal subunit protein uS8 (132 aa).

This sequence belongs to the universal ribosomal protein uS8 family. As to quaternary structure, part of the 30S ribosomal subunit. Contacts proteins S5 and S12.

In terms of biological role, one of the primary rRNA binding proteins, it binds directly to 16S rRNA central domain where it helps coordinate assembly of the platform of the 30S subunit. The chain is Small ribosomal subunit protein uS8 from Leuconostoc citreum (strain KM20).